The following is a 1073-amino-acid chain: Carbamoyl phosphate synthase large chain (1073 aa).

Residues 1-403 (MPKRTDIKSI…SLQKALRGLE (403 aa)) form a carboxyphosphate synthetic domain region. ATP-binding residues include arginine 129, arginine 169, glycine 175, glycine 176, glutamate 208, leucine 210, glutamate 215, glycine 241, valine 242, histidine 243, glutamine 285, and glutamate 299. Residues 133–328 (DKAMKDIGLE…IAKIAAKLAI (196 aa)) enclose the ATP-grasp 1 domain. Positions 285, 299, and 301 each coordinate Mg(2+). 3 residues coordinate Mn(2+): glutamine 285, glutamate 299, and asparagine 301. The segment at 404–553 (VGACGLDPKV…YSTYEEECEA (150 aa)) is oligomerization domain. The segment at 554-935 (NPSTRDKIMI…AFAKAQMGAS (382 aa)) is carbamoyl phosphate synthetic domain. The ATP-grasp 2 domain occupies 678 to 869 (QQMVQRLSLL…LAMIAARVMA (192 aa)). ATP is bound by residues arginine 714, histidine 753, leucine 755, glutamate 760, glycine 785, valine 786, histidine 787, serine 788, glutamine 828, and glutamate 840. Positions 828, 840, and 842 each coordinate Mg(2+). Mn(2+)-binding residues include glutamine 828, glutamate 840, and asparagine 842. The MGS-like domain maps to 936–1073 (EVLPTGGTAF…LQDLHAGLKA (138 aa)). Residues 936–1073 (EVLPTGGTAF…LQDLHAGLKA (138 aa)) are allosteric domain.

The protein belongs to the CarB family. In terms of assembly, composed of two chains; the small (or glutamine) chain promotes the hydrolysis of glutamine to ammonia, which is used by the large (or ammonia) chain to synthesize carbamoyl phosphate. Tetramer of heterodimers (alpha,beta)4. The cofactor is Mg(2+). Mn(2+) serves as cofactor.

The catalysed reaction is hydrogencarbonate + L-glutamine + 2 ATP + H2O = carbamoyl phosphate + L-glutamate + 2 ADP + phosphate + 2 H(+). It catalyses the reaction hydrogencarbonate + NH4(+) + 2 ATP = carbamoyl phosphate + 2 ADP + phosphate + 2 H(+). It functions in the pathway amino-acid biosynthesis; L-arginine biosynthesis; carbamoyl phosphate from bicarbonate: step 1/1. Its pathway is pyrimidine metabolism; UMP biosynthesis via de novo pathway; (S)-dihydroorotate from bicarbonate: step 1/3. In terms of biological role, large subunit of the glutamine-dependent carbamoyl phosphate synthetase (CPSase). CPSase catalyzes the formation of carbamoyl phosphate from the ammonia moiety of glutamine, carbonate, and phosphate donated by ATP, constituting the first step of 2 biosynthetic pathways, one leading to arginine and/or urea and the other to pyrimidine nucleotides. The large subunit (synthetase) binds the substrates ammonia (free or transferred from glutamine from the small subunit), hydrogencarbonate and ATP and carries out an ATP-coupled ligase reaction, activating hydrogencarbonate by forming carboxy phosphate which reacts with ammonia to form carbamoyl phosphate. In Pseudomonas putida (strain ATCC 47054 / DSM 6125 / CFBP 8728 / NCIMB 11950 / KT2440), this protein is Carbamoyl phosphate synthase large chain.